The sequence spans 126 residues: Holo-[acyl-carrier-protein] synthase (126 aa).

Asp8 and Glu57 together coordinate Mg(2+).

This sequence belongs to the P-Pant transferase superfamily. AcpS family. Mg(2+) is required as a cofactor.

The protein localises to the cytoplasm. The catalysed reaction is apo-[ACP] + CoA = holo-[ACP] + adenosine 3',5'-bisphosphate + H(+). Transfers the 4'-phosphopantetheine moiety from coenzyme A to a Ser of acyl-carrier-protein. This Trichlorobacter lovleyi (strain ATCC BAA-1151 / DSM 17278 / SZ) (Geobacter lovleyi) protein is Holo-[acyl-carrier-protein] synthase.